Here is a 608-residue protein sequence, read N- to C-terminus: MATMLKLLALTLAISESAIGAVMHPPGNSHPGTHMGTTNNTHCGADFCTWWHDSGEINTQTPVQPGNVRQSHKYSVQVSLAGTNNFHDSFVYESIPRNGNGRIYAPTDPPNSNTLDSSVDDGISIEPSIGLNMAWSQFEYSHDVDVKILATDGSSLGSPSDVVIRPVSISYAISQSDDGGIVIRVPADANGRKFSVEFKTDLYTFLSDGNEYVTSGGSVVGVEPTNALVIFASPFLPSGMIPHMTPDNTQTMTPGPINNGDWGAKSILYFPPGVYWMNQDQSGNSGKLGSNHIRLNSNTYWVYLAPGAYVKGAIEYFTKQNFYATGHGILSGENYVYQANAGDNYIAVKSDSTSLRMWWHNNLGGGQTWYCVGPTINAPPFNTMDFNGNSGISSQISDYKQVGAFFFQTDGPEIYPNSVVHDVFWHVNDDAIKIYYSGASVSRATIWKCHNDPIIQMGWTSRDISGVTIDTLNVIHTRYIKSETVVPSAIIGASPFYASGMSPDSRKSISMTVSNVVCEGLCPSLFRITPLQNYKNFVVKNVAFPDGLQTNSIGTGESIIPAASGLTMGLNISNWTVGGQKVTMENFQANSLGQFNIDGSYWGEWQIS.

An N-terminal signal peptide occupies residues 1–19 (MATMLKLLALTLAISESAI). Positions 20–34 (GAVMHPPGNSHPGTH) are excised as a propeptide. N-linked (GlcNAc...) asparagine glycans are attached at residues Asn-39, Asn-571, and Asn-574.

It belongs to the glycosyl hydrolase 49 family. Post-translationally, N-glycosylated.

Its subcellular location is the secreted. It carries out the reaction Endohydrolysis of (1-&gt;6)-alpha-D-glucosidic linkages in dextran.. In Talaromyces minioluteus (Filamentous fungus), this protein is Dextranase (DEX).